Consider the following 221-residue polypeptide: UPF0758 protein PC1_4100 (221 aa).

Residues 99–221 enclose the MPN domain; it reads AMLNPQATGQ…YVSFAERGWI (123 aa). Zn(2+)-binding residues include His-170, His-172, and Asp-183. Residues 170–183 carry the JAMM motif motif; sequence HNHPSGKAEPSQAD.

The protein belongs to the UPF0758 family. YicR subfamily.

This Pectobacterium carotovorum subsp. carotovorum (strain PC1) protein is UPF0758 protein PC1_4100.